The chain runs to 256 residues: Thiazole synthase (256 aa).

K95 serves as the catalytic Schiff-base intermediate with DXP. Residues G156, 182-183, and 204-205 contribute to the 1-deoxy-D-xylulose 5-phosphate site; these read AG and NT.

This sequence belongs to the ThiG family. Homotetramer. Forms heterodimers with either ThiH or ThiS.

It is found in the cytoplasm. The enzyme catalyses [ThiS sulfur-carrier protein]-C-terminal-Gly-aminoethanethioate + 2-iminoacetate + 1-deoxy-D-xylulose 5-phosphate = [ThiS sulfur-carrier protein]-C-terminal Gly-Gly + 2-[(2R,5Z)-2-carboxy-4-methylthiazol-5(2H)-ylidene]ethyl phosphate + 2 H2O + H(+). Its pathway is cofactor biosynthesis; thiamine diphosphate biosynthesis. Its function is as follows. Catalyzes the rearrangement of 1-deoxy-D-xylulose 5-phosphate (DXP) to produce the thiazole phosphate moiety of thiamine. Sulfur is provided by the thiocarboxylate moiety of the carrier protein ThiS. In vitro, sulfur can be provided by H(2)S. In Escherichia coli O8 (strain IAI1), this protein is Thiazole synthase.